The chain runs to 537 residues: Exoglucanase 1 (537 aa).

An N-terminal signal peptide occupies residues 1 to 18 (MKGSISYQIYKGALLLSA). The segment at 19–453 (LLNSVSAQQV…YVIYSNIKTG (435 aa)) is catalytic. The N-linked (GlcNAc...) asparagine glycan is linked to N136. The active-site Nucleophile is E235. E240 (proton donor) is an active-site residue. N-linked (GlcNAc...) asparagine glycosylation is found at N414 and N456. Positions 454-477 (PLNSTFTGGTTSSSSTTTTTSKST) are linker. Positions 458 to 502 (TFTGGTTSSSSTTTTTSKSTSTSSSSKTTTTVTTTTTSSGSSGTG) are enriched in low complexity. Residues 458–503 (TFTGGTTSSSSTTTTTSKSTSTSSSSKTTTTVTTTTTSSGSSGTGA) form a disordered region. The CBM1 domain occupies 501 to 537 (TGARDWAQCGGNGWTGPTTCVSPYTCTKQNDWYSQCL). 2 cysteine pairs are disulfide-bonded: C509–C526 and C520–C536.

Belongs to the glycosyl hydrolase 7 (cellulase C) family.

It is found in the secreted. The catalysed reaction is Hydrolysis of (1-&gt;4)-beta-D-glucosidic linkages in cellulose and cellotetraose, releasing cellobiose from the non-reducing ends of the chains.. This is Exoglucanase 1 (cbh1) from Penicillium janthinellum (Penicillium vitale).